Here is a 272-residue protein sequence, read N- to C-terminus: Ethanolamine ammonia-lyase small subunit (272 aa).

Positions 161, 182, and 211 each coordinate adenosylcob(III)alamin.

Belongs to the EutC family. In terms of assembly, the basic unit is a heterodimer which dimerizes to form tetramers. The heterotetramers trimerize; 6 large subunits form a core ring with 6 small subunits projecting outwards. The cofactor is adenosylcob(III)alamin.

Its subcellular location is the bacterial microcompartment. It catalyses the reaction ethanolamine = acetaldehyde + NH4(+). Its pathway is amine and polyamine degradation; ethanolamine degradation. Catalyzes the deamination of various vicinal amino-alcohols to oxo compounds. Allows this organism to utilize ethanolamine as the sole source of nitrogen and carbon in the presence of external vitamin B12. This chain is Ethanolamine ammonia-lyase small subunit, found in Pseudomonas putida (strain ATCC 700007 / DSM 6899 / JCM 31910 / BCRC 17059 / LMG 24140 / F1).